The primary structure comprises 197 residues: ATP-dependent Clp protease proteolytic subunit 1 (197 aa).

Residue His-126 is part of the active site.

Belongs to the peptidase S14 family. Fourteen ClpP subunits assemble into 2 heptameric rings which stack back to back to give a disk-like structure with a central cavity, resembling the structure of eukaryotic proteasomes.

The protein localises to the cytoplasm. It catalyses the reaction Hydrolysis of proteins to small peptides in the presence of ATP and magnesium. alpha-casein is the usual test substrate. In the absence of ATP, only oligopeptides shorter than five residues are hydrolyzed (such as succinyl-Leu-Tyr-|-NHMec, and Leu-Tyr-Leu-|-Tyr-Trp, in which cleavage of the -Tyr-|-Leu- and -Tyr-|-Trp bonds also occurs).. Its function is as follows. Cleaves peptides in various proteins in a process that requires ATP hydrolysis. Has a chymotrypsin-like activity. Plays a major role in the degradation of misfolded proteins. The sequence is that of ATP-dependent Clp protease proteolytic subunit 1 from Nocardia farcinica (strain IFM 10152).